Consider the following 269-residue polypeptide: C-type lectin domain family 2 member G (269 aa).

At 1-107 the chain is on the cytoplasmic side; that stretch reads MNITRASLPM…SPESSAKLYC (107 aa). Residues 108–128 traverse the membrane as a helical; Signal-anchor for type II membrane protein segment; the sequence is CCGVIMVLTVAVVALSVALPA. Topologically, residues 129 to 269 are extracellular; the sequence is TKTEQILINK…SLHCPTPVPV (141 aa). A C-type lectin domain is found at 150 to 254; that stretch reads VGNKCFYFSE…HYIPRIWICS (105 aa). N163 carries N-linked (GlcNAc...) asparagine glycosylation. A disulfide bridge connects residues C171 and C253.

As to expression, detected in vagina, eye, tongue, stomach and spleen.

Its subcellular location is the cell membrane. In terms of biological role, inhibits osteoclast formation. The protein is C-type lectin domain family 2 member G (Clec2g) of Mus musculus (Mouse).